A 185-amino-acid polypeptide reads, in one-letter code: Nucleoside triphosphate pyrophosphatase (185 aa).

Catalysis depends on D70, which acts as the Proton acceptor.

Belongs to the Maf family. A divalent metal cation is required as a cofactor.

Its subcellular location is the cytoplasm. It catalyses the reaction a ribonucleoside 5'-triphosphate + H2O = a ribonucleoside 5'-phosphate + diphosphate + H(+). The catalysed reaction is a 2'-deoxyribonucleoside 5'-triphosphate + H2O = a 2'-deoxyribonucleoside 5'-phosphate + diphosphate + H(+). In terms of biological role, nucleoside triphosphate pyrophosphatase. May have a dual role in cell division arrest and in preventing the incorporation of modified nucleotides into cellular nucleic acids. This chain is Nucleoside triphosphate pyrophosphatase, found in Nitratiruptor sp. (strain SB155-2).